The primary structure comprises 218 residues: Cell division protein SepF (218 aa).

The tract at residues 25–115 (DVAASTDNVI…IANRREQYQQ (91 aa)) is disordered. Polar residues predominate over residues 29–43 (STDNVIPRSQQSVRA). Over residues 47-63 (PKQEPRNNHVQQDHQAR) the composition is skewed to basic and acidic residues.

Belongs to the SepF family. In terms of assembly, homodimer. Interacts with FtsZ.

The protein localises to the cytoplasm. In terms of biological role, cell division protein that is part of the divisome complex and is recruited early to the Z-ring. Probably stimulates Z-ring formation, perhaps through the cross-linking of FtsZ protofilaments. Its function overlaps with FtsA. This Streptococcus pyogenes serotype M12 (strain MGAS2096) protein is Cell division protein SepF.